The sequence spans 313 residues: Protein ABA AND ROS SENSITIVE 1 (313 aa).

The Nuclear localization signal 1 motif lies at alanine 5–arginine 12. The segment at cysteine 39–histidine 61 adopts a C2H2-type zinc-finger fold. Residues alanine 115 to lysine 131 show a composition bias toward basic and acidic residues. 3 disordered regions span residues alanine 115–glycine 189, methionine 232–tyrosine 254, and alanine 271–leucine 313. Positions threonine 155–proline 176 are enriched in polar residues. The segment covering methionine 232–glutamine 248 has biased composition (acidic residues). Residues methionine 232–alanine 271 are a coiled coil. A Nuclear localization signal 2 motif is present at residues alanine 274–glutamate 281. Positions glutamate 293–alanine 305 are enriched in acidic residues.

In terms of tissue distribution, mostly expressed in siliques and, to a lower extent, in roots. Barely deteclable in leaves and stems.

Its subcellular location is the nucleus. It localises to the cytoplasm. In terms of biological role, essential for breaking seed dormancy before seed germination. Prevents reactive oxygen species (ROS) accumulation in response to abscisic acid (ABA) and oxidative stress, probably by repressing the accumulation of ABA-induced ROS-scavenging enzymes (e.g. CSD3). The sequence is that of Protein ABA AND ROS SENSITIVE 1 from Arabidopsis thaliana (Mouse-ear cress).